Reading from the N-terminus, the 496-residue chain is Pituitary adenylate cyclase-activating polypeptide type I receptor (496 aa).

An N-terminal signal peptide occupies residues 1-20 (MARTLQLSLTALLLLPMAIA). The Extracellular portion of the chain corresponds to 21-152 (MHSDCIFKKE…SGDQDYYYLS (132 aa)). 3 disulfides stabilise this stretch: Cys-34–Cys-63, Cys-54–Cys-118, and Cys-77–Cys-134. 3 N-linked (GlcNAc...) asparagine glycosylation sites follow: Asn-48, Asn-60, and Asn-117. The important for ADCYAP1/PACAP ligand binding and specificity stretch occupies residues 125-139 (EPFPHYFDACGFDDY). The segment at 125-139 (EPFPHYFDACGFDDY) is important for ligand binding and specificity. A helical membrane pass occupies residues 153 to 177 (VKALYTVGYSTSLVTLTTAMVILCR). Residues 178-187 (FRKLHCTRNF) are Cytoplasmic-facing. A helical transmembrane segment spans residues 188-208 (IHMNLFVSFMLRAISVFIKDW). The Extracellular portion of the chain corresponds to 209–223 (ILYAEQDSSHCFVST). A helical membrane pass occupies residues 224–249 (VECKAVMVFFHYCVVSNYFWLFIEGL). Cys-226 and Cys-296 are disulfide-bonded. Residues 250-267 (YLFTLLVETFFPERRYFY) are Cytoplasmic-facing. A helical transmembrane segment spans residues 268-290 (WYTIIGWGTPTVCVTVWAVLRLY). The Extracellular segment spans residues 291-302 (FDDAGCWDMNDS). The helical transmembrane segment at 303–329 (TALWWVIKGPVVGSIMVNFVLFIGIII) threads the bilayer. The Cytoplasmic segment spans residues 330 to 347 (ILVQKLQSPDMGGNESSI). Residues 348 to 402 (YFSCVQKCYCKPQRAQQHSCKMSELSTITLRLARSTLLLIPLFGIHYTVFAFSPE) traverse the membrane as a helical segment. Over 403–407 (NVSKR) the chain is Extracellular. A helical membrane pass occupies residues 408 to 431 (ERLVFELGLGSFQGFVVAVLYCFL). The Cytoplasmic segment spans residues 432 to 496 (NGEVQAEIKR…SSLPADNLAT (65 aa)). Phosphoserine occurs at positions 462 and 475.

This sequence belongs to the G-protein coupled receptor 2 family. As to quaternary structure, interacts with maxadilan, a vasodilator peptide from Lutzomyia longipalpis saliva; the interaction results in ADCYAP1R1 activation.

It is found in the cell membrane. Its function is as follows. G protein-coupled receptor activated by the neuropeptide pituitary adenylate cyclase-activating polypeptide (ADCYAP1/PACAP). Binds both PACAP27 and PACAP38 bioactive peptides. Ligand binding causes a conformation change that triggers signaling via guanine nucleotide-binding proteins (G proteins) and modulates the activity of downstream effectors. Activates cAMP-dependent pathway. May regulate the release of adrenocorticotropin, luteinizing hormone, growth hormone, prolactin, epinephrine, and catecholamine. May play a role in spermatogenesis and sperm motility. Causes smooth muscle relaxation and secretion in the gastrointestinal tract. The polypeptide is Pituitary adenylate cyclase-activating polypeptide type I receptor (Mus musculus (Mouse)).